Reading from the N-terminus, the 163-residue chain is Putative H/ACA ribonucleoprotein complex subunit 2-like protein (163 aa).

Belongs to the eukaryotic ribosomal protein eL8 family. In terms of assembly, component of the small nucleolar ribonucleoprotein particle containing H/ACA-type snoRNAs (H/ACA snoRNPs).

Its subcellular location is the nucleus. It is found in the nucleolus. In terms of biological role, required for ribosome biogenesis. Part of a complex which catalyzes pseudouridylation of rRNA. This involves the isomerization of uridine such that the ribose is subsequently attached to C5, instead of the normal N1. Pseudouridine ('psi') residues may serve to stabilize the conformation of rRNAs. This is Putative H/ACA ribonucleoprotein complex subunit 2-like protein from Caenorhabditis briggsae.